Here is a 580-residue protein sequence, read N- to C-terminus: 2-succinyl-5-enolpyruvyl-6-hydroxy-3-cyclohexene-1-carboxylate synthase (580 aa).

Belongs to the TPP enzyme family. MenD subfamily. As to quaternary structure, homodimer. It depends on Mg(2+) as a cofactor. The cofactor is Mn(2+). Requires thiamine diphosphate as cofactor.

It carries out the reaction isochorismate + 2-oxoglutarate + H(+) = 5-enolpyruvoyl-6-hydroxy-2-succinyl-cyclohex-3-ene-1-carboxylate + CO2. Its pathway is quinol/quinone metabolism; 1,4-dihydroxy-2-naphthoate biosynthesis; 1,4-dihydroxy-2-naphthoate from chorismate: step 2/7. The protein operates within quinol/quinone metabolism; menaquinone biosynthesis. In terms of biological role, catalyzes the thiamine diphosphate-dependent decarboxylation of 2-oxoglutarate and the subsequent addition of the resulting succinic semialdehyde-thiamine pyrophosphate anion to isochorismate to yield 2-succinyl-5-enolpyruvyl-6-hydroxy-3-cyclohexene-1-carboxylate (SEPHCHC). The polypeptide is 2-succinyl-5-enolpyruvyl-6-hydroxy-3-cyclohexene-1-carboxylate synthase (Listeria monocytogenes serotype 4b (strain F2365)).